We begin with the raw amino-acid sequence, 341 residues long: Abnormal cell lineage protein 44 (341 aa).

An N-terminal signal peptide occupies residues 1–21 (MRALYFRTTTLSTFFILCSLA). 11 disulfides stabilise this stretch: cysteine 84-cysteine 95, cysteine 134-cysteine 142, cysteine 144-cysteine 158, cysteine 206-cysteine 220, cysteine 208-cysteine 215, cysteine 265-cysteine 292, cysteine 275-cysteine 287, cysteine 291-cysteine 331, cysteine 307-cysteine 322, cysteine 309-cysteine 319, and cysteine 314-cysteine 315. Serine 212 carries the O-palmitoleoyl serine; by mom-1 lipid modification. Asparagine 279 is a glycosylation site (N-linked (GlcNAc...) asparagine).

The protein belongs to the Wnt family. Post-translationally, palmitoleoylation is required for efficient binding to frizzled receptors. Depalmitoleoylation leads to Wnt signaling pathway inhibition.

Its subcellular location is the secreted. It is found in the extracellular space. The protein resides in the extracellular matrix. In terms of biological role, ligand for members of the frizzled family of seven transmembrane receptors. Affects male tail development, vulval precursor cell specification and egg laying. Involved in morphogenesis by influencing polarity of asymmetric cell divisions of the B, U, and F cells in the male, and the T cell in males and hermaphrodites. Controls spindle orientation in B-gamma cell division during male copulatory spicule development. Involved in specification of the P7.p lineage during vulval development. Has a role in providing polarity and default lin-17 localization in axon development and positioning of neuromuscular synapses in DA9 regions by negatively regulating synaptogenesis. The sequence is that of Abnormal cell lineage protein 44 from Caenorhabditis briggsae.